A 1224-amino-acid chain; its full sequence is A disintegrin and metalloproteinase with thrombospondin motifs 16 (1224 aa).

A signal peptide spans 1–24; that stretch reads MKPRARGWRGLAALWMLLAQVAEQ. The propeptide occupies 25–279; that stretch reads APACAMGPAA…EYKSCLRHKR (255 aa). The segment at 31 to 53 is disordered; it reads GPAAAAPGSPSVPRPPPPAERPG. The segment covering 40–50 has biased composition (pro residues); that stretch reads PSVPRPPPPAE. Asn156 is a glycosylation site (N-linked (GlcNAc...) asparagine). The Cysteine switch motif lies at 247–254; that stretch reads HFCGRRKK. A Zn(2+)-binding site is contributed by Cys249. The Peptidase M12B domain maps to 290 to 495; sequence LNVETLVVVD…AQAICLADQP (206 aa). Asn310 carries N-linked (GlcNAc...) asparagine glycosylation. 11 disulfides stabilise this stretch: Cys366-Cys417, Cys392-Cys399, Cys411-Cys490, Cys450-Cys474, Cys518-Cys543, Cys529-Cys550, Cys538-Cys569, Cys563-Cys574, Cys598-Cys635, Cys602-Cys640, and Cys613-Cys625. His433 contributes to the Zn(2+) binding site. Glu434 is a catalytic residue. The Zn(2+) site is built by His437 and His443. One can recognise a Disintegrin domain in the interval 496–585; it reads KPVKEYKYPE…KYGDEGPKPT (90 aa). Residues 586–641 form the TSP type-1 1 domain; it reads HGHWSDWSSWSPCSRTCGGGVSHRSRLCTNPKPSHGGKFCEGSTRTLKLCNSQKCP. N-linked (GlcNAc...) asparagine glycans are attached at residues Asn741, Asn780, Asn835, Asn905, and Asn935. The interval 747-873 is spacer; that stretch reads IHRGLYTKHH…KQPPAQPSYT (127 aa). TSP type-1 domains lie at 874–922, 927–987, 988–1048, 1051–1115, and 1127–1181; these read WAIV…LVPC, CPPS…QSCP, PAWS…QRCH, KKLQ…LPCP, and RGSW…HFCP. 3 disulfides stabilise this stretch: Cys939/Cys981, Cys943/Cys986, and Cys954/Cys970. The region spanning 1186 to 1223 is the PLAC domain; that stretch reads KDAFCKDYFHWCYLVPQHGMCSHKFYGKQCCKTCSKSN.

Zn(2+) is required as a cofactor. The precursor is cleaved by a furin endopeptidase. In terms of processing, glycosylated. Can be O-fucosylated by POFUT2 on a serine or a threonine residue found within the consensus sequence C1-X(2)-(S/T)-C2-G of the TSP type-1 repeat domains where C1 and C2 are the first and second cysteine residue of the repeat, respectively. Fucosylated repeats can then be further glycosylated by the addition of a beta-1,3-glucose residue by the glucosyltransferase, B3GALTL. Fucosylation mediates the efficient secretion of ADAMTS family members. Can also be C-glycosylated with one or two mannose molecules on tryptophan residues within the consensus sequence W-X-X-W of the TPRs, and N-glycosylated. These other glycosylations can also facilitate secretion. In terms of tissue distribution, expressed in fetal lung and kidney and in adult prostate and ovary.

Its subcellular location is the secreted. The protein localises to the extracellular space. It is found in the extracellular matrix. The protein is A disintegrin and metalloproteinase with thrombospondin motifs 16 (ADAMTS16) of Homo sapiens (Human).